The following is a 416-amino-acid chain: Serine hydroxymethyltransferase 1 (416 aa).

Residues leucine 121 and 125–127 contribute to the (6S)-5,6,7,8-tetrahydrofolate site; that span reads GHL. Lysine 229 carries the N6-(pyridoxal phosphate)lysine modification. (6S)-5,6,7,8-tetrahydrofolate is bound by residues glutamate 245 and 354–356; that span reads SPF.

The protein belongs to the SHMT family. In terms of assembly, homodimer. The cofactor is pyridoxal 5'-phosphate.

It is found in the cytoplasm. The enzyme catalyses (6R)-5,10-methylene-5,6,7,8-tetrahydrofolate + glycine + H2O = (6S)-5,6,7,8-tetrahydrofolate + L-serine. The protein operates within one-carbon metabolism; tetrahydrofolate interconversion. It functions in the pathway amino-acid biosynthesis; glycine biosynthesis; glycine from L-serine: step 1/1. Catalyzes the reversible interconversion of serine and glycine with tetrahydrofolate (THF) serving as the one-carbon carrier. This reaction serves as the major source of one-carbon groups required for the biosynthesis of purines, thymidylate, methionine, and other important biomolecules. Also exhibits THF-independent aldolase activity toward beta-hydroxyamino acids, producing glycine and aldehydes, via a retro-aldol mechanism. The protein is Serine hydroxymethyltransferase 1 of Vibrio vulnificus (strain CMCP6).